Consider the following 124-residue polypeptide: UPF0482 protein YPK_1977 (124 aa).

The N-terminal stretch at 1-32 (MMKINNLPRLIRAFLPATLLMLPLVWQTPALA) is a signal peptide. Residues 47–69 (GGNNDPMSKEQARQSQQQWDETN) are disordered.

Belongs to the UPF0482 family.

In Yersinia pseudotuberculosis serotype O:3 (strain YPIII), this protein is UPF0482 protein YPK_1977.